Consider the following 65-residue polypeptide: MLINATKVLSSSGFTNIEITGYNWFGCSENDFQHTGFRAIGPTGQKVEGTVCSGLFFKDSTIRFK.

This is an uncharacterized protein from Escherichia coli (Bacteriophage T4).